Consider the following 172-residue polypeptide: NADH-quinone oxidoreductase subunit B (172 aa).

4 residues coordinate [4Fe-4S] cluster: cysteine 46, cysteine 47, cysteine 111, and cysteine 141.

It belongs to the complex I 20 kDa subunit family. In terms of assembly, NDH-1 is composed of 14 different subunits. Subunits NuoB, C, D, E, F, and G constitute the peripheral sector of the complex. [4Fe-4S] cluster serves as cofactor.

Its subcellular location is the cell membrane. It carries out the reaction a quinone + NADH + 5 H(+)(in) = a quinol + NAD(+) + 4 H(+)(out). NDH-1 shuttles electrons from NADH, via FMN and iron-sulfur (Fe-S) centers, to quinones in the respiratory chain. The immediate electron acceptor for the enzyme in this species is believed to be a menaquinone. Couples the redox reaction to proton translocation (for every two electrons transferred, four hydrogen ions are translocated across the cytoplasmic membrane), and thus conserves the redox energy in a proton gradient. This Bacillus mycoides (strain KBAB4) (Bacillus weihenstephanensis) protein is NADH-quinone oxidoreductase subunit B.